The sequence spans 79 residues: Acyl carrier protein (79 aa).

The Carrier domain occupies 2–79 (ASKEEILAGL…QDAVDFIXGA (78 aa)). Residue Ser-40 is modified to O-(pantetheine 4'-phosphoryl)serine.

Belongs to the acyl carrier protein (ACP) family. 4'-phosphopantetheine is transferred from CoA to a specific serine of apo-ACP by AcpS. This modification is essential for activity because fatty acids are bound in thioester linkage to the sulfhydryl of the prosthetic group.

It is found in the cytoplasm. It participates in lipid metabolism; fatty acid biosynthesis. In terms of biological role, carrier of the growing fatty acid chain in fatty acid biosynthesis. This is Acyl carrier protein from Myxococcus xanthus.